Here is a 413-residue protein sequence, read N- to C-terminus: MNIYAVGGAIRDELLGVPVQDRDYVVVGATPEQMTAQGFRAVGKDFPVFLHPQTQEEYALARTERKTAAGYHGFQFHYAPDVTLDEDLARRDLTINAMAREVSPEGALVGPVIDPFDGQADLRARVFRHVSDAFVEDPVRILRIARFAARFADFTVADETLALMRRMVDAGEVDALVPERVWQEIARGLMEAKPSRMFAVLRDCGALARILPEVDALWGVPQRADYHPEVDTGVHVMMVVDYAAKQGYSLAVRFAALTHDLGKGTTPADVLPRHVGHESRSVELLKPLCERLRVPNECRDLALVVAREHGNLHRVMEMGAAALVRLFERSDALRKPARFAELLQACESDARGRLGLDAQPYPQAERLRVALAAARSVDAGAIARGIGNDTEKIKEAVHRARIQAVAQALAIGE.

Gly-8 and Arg-11 together coordinate ATP. CTP is bound by residues Gly-8 and Arg-11. Mg(2+) is bound by residues Asp-21 and Asp-23. 3 residues coordinate ATP: Arg-91, Arg-143, and Arg-146. CTP contacts are provided by Arg-91, Arg-143, and Arg-146. The HD domain maps to 232-333 (TGVHVMMVVD…VRLFERSDAL (102 aa)).

The protein belongs to the tRNA nucleotidyltransferase/poly(A) polymerase family. Bacterial CCA-adding enzyme type 1 subfamily. As to quaternary structure, monomer. Can also form homodimers and oligomers. Requires Mg(2+) as cofactor. It depends on Ni(2+) as a cofactor.

It carries out the reaction a tRNA precursor + 2 CTP + ATP = a tRNA with a 3' CCA end + 3 diphosphate. The enzyme catalyses a tRNA with a 3' CCA end + 2 CTP + ATP = a tRNA with a 3' CCACCA end + 3 diphosphate. In terms of biological role, catalyzes the addition and repair of the essential 3'-terminal CCA sequence in tRNAs without using a nucleic acid template. Adds these three nucleotides in the order of C, C, and A to the tRNA nucleotide-73, using CTP and ATP as substrates and producing inorganic pyrophosphate. tRNA 3'-terminal CCA addition is required both for tRNA processing and repair. Also involved in tRNA surveillance by mediating tandem CCA addition to generate a CCACCA at the 3' terminus of unstable tRNAs. While stable tRNAs receive only 3'-terminal CCA, unstable tRNAs are marked with CCACCA and rapidly degraded. In Burkholderia cenocepacia (strain HI2424), this protein is Multifunctional CCA protein.